The chain runs to 200 residues: NADH-quinone oxidoreductase subunit C 1 (200 aa).

It belongs to the complex I 30 kDa subunit family. In terms of assembly, NDH-1 is composed of 14 different subunits. Subunits NuoB, C, D, E, F, and G constitute the peripheral sector of the complex.

It is found in the cell inner membrane. It catalyses the reaction a quinone + NADH + 5 H(+)(in) = a quinol + NAD(+) + 4 H(+)(out). Functionally, NDH-1 shuttles electrons from NADH, via FMN and iron-sulfur (Fe-S) centers, to quinones in the respiratory chain. The immediate electron acceptor for the enzyme in this species is believed to be ubiquinone. Couples the redox reaction to proton translocation (for every two electrons transferred, four hydrogen ions are translocated across the cytoplasmic membrane), and thus conserves the redox energy in a proton gradient. This is NADH-quinone oxidoreductase subunit C 1 from Rhizobium etli (strain CIAT 652).